Consider the following 261-residue polypeptide: 5'-nucleotidase SurE (261 aa).

4 residues coordinate a divalent metal cation: aspartate 8, aspartate 9, serine 39, and asparagine 94.

It belongs to the SurE nucleotidase family. A divalent metal cation serves as cofactor.

The protein resides in the cytoplasm. The catalysed reaction is a ribonucleoside 5'-phosphate + H2O = a ribonucleoside + phosphate. Nucleotidase that shows phosphatase activity on nucleoside 5'-monophosphates. In Archaeoglobus fulgidus (strain ATCC 49558 / DSM 4304 / JCM 9628 / NBRC 100126 / VC-16), this protein is 5'-nucleotidase SurE.